The following is a 60-amino-acid chain: Cytotoxin 1 (60 aa).

4 cysteine pairs are disulfide-bonded: C3/C21, C14/C38, C42/C53, and C54/C59.

Belongs to the three-finger toxin family. Short-chain subfamily. Type IA cytotoxin sub-subfamily. As to quaternary structure, monomer in solution; Homodimer and oligomer in the presence of negatively charged lipids forming a pore with a size ranging between 20 and 30 Angstroms. Expressed by the venom gland.

Its subcellular location is the secreted. It is found in the target cell membrane. Shows cytolytic activity on many different cells by forming pore in lipid membranes. In vivo, increases heart rate or kills the animal by cardiac arrest. In addition, it binds to heparin with high affinity, interacts with Kv channel-interacting protein 1 (KCNIP1) in a calcium-independent manner, and binds to integrin alpha-V/beta-3 (ITGAV/ITGB3) with moderate affinity. The sequence is that of Cytotoxin 1 from Naja mossambica (Mozambique spitting cobra).